The sequence spans 141 residues: Hemoglobin subunit alpha (141 aa).

Positions valine 1–arginine 141 constitute a Globin domain. At serine 3 the chain carries Phosphoserine. Lysine 7 is subject to N6-succinyllysine. Phosphothreonine is present on threonine 8. Lysine 16 is modified (N6-acetyllysine; alternate). Lysine 16 bears the N6-succinyllysine; alternate mark. Phosphotyrosine is present on tyrosine 24. N6-succinyllysine is present on lysine 40. Residue serine 49 is modified to Phosphoserine. Histidine 58 contacts O2. Position 87 (histidine 87) interacts with heme b. The residue at position 102 (serine 102) is a Phosphoserine. Threonine 108 bears the Phosphothreonine mark. A phosphoserine mark is found at serine 124 and serine 131. Phosphothreonine is present on residues threonine 134 and threonine 137. Phosphoserine is present on serine 138.

It belongs to the globin family. In terms of assembly, heterotetramer of two alpha chains and two beta chains. In terms of tissue distribution, red blood cells.

In terms of biological role, involved in oxygen transport from the lung to the various peripheral tissues. Its function is as follows. Hemopressin acts as an antagonist peptide of the cannabinoid receptor CNR1. Hemopressin-binding efficiently blocks cannabinoid receptor CNR1 and subsequent signaling. The sequence is that of Hemoglobin subunit alpha (HBA) from Mesocricetus auratus (Golden hamster).